Reading from the N-terminus, the 120-residue chain is UPF0231 protein Ent638_0667 (120 aa).

The protein belongs to the UPF0231 family.

This Enterobacter sp. (strain 638) protein is UPF0231 protein Ent638_0667.